The sequence spans 378 residues: tRNA-specific 2-thiouridylase MnmA (378 aa).

ATP contacts are provided by residues alanine 6–serine 13 and leucine 32. Cysteine 101 acts as the Nucleophile in catalysis. Cysteines 101 and 199 form a disulfide. An ATP-binding site is contributed by glycine 125. Residues lysine 148–glutamine 150 form an interaction with tRNA region. Residue cysteine 199 is the Cysteine persulfide intermediate of the active site.

Belongs to the MnmA/TRMU family.

Its subcellular location is the cytoplasm. The enzyme catalyses S-sulfanyl-L-cysteinyl-[protein] + uridine(34) in tRNA + AH2 + ATP = 2-thiouridine(34) in tRNA + L-cysteinyl-[protein] + A + AMP + diphosphate + H(+). Its function is as follows. Catalyzes the 2-thiolation of uridine at the wobble position (U34) of tRNA, leading to the formation of s(2)U34. The protein is tRNA-specific 2-thiouridylase MnmA of Micrococcus luteus (strain ATCC 4698 / DSM 20030 / JCM 1464 / CCM 169 / CCUG 5858 / IAM 1056 / NBRC 3333 / NCIMB 9278 / NCTC 2665 / VKM Ac-2230) (Micrococcus lysodeikticus).